The chain runs to 130 residues: Small ribosomal subunit protein uS8 (130 aa).

This sequence belongs to the universal ribosomal protein uS8 family. Part of the 30S ribosomal subunit. Contacts proteins S5 and S12.

Its function is as follows. One of the primary rRNA binding proteins, it binds directly to 16S rRNA central domain where it helps coordinate assembly of the platform of the 30S subunit. This chain is Small ribosomal subunit protein uS8, found in Shewanella halifaxensis (strain HAW-EB4).